A 213-amino-acid polypeptide reads, in one-letter code: Probable transaldolase (213 aa).

K83 functions as the Schiff-base intermediate with substrate in the catalytic mechanism.

The protein belongs to the transaldolase family. Type 3B subfamily.

It localises to the cytoplasm. It catalyses the reaction D-sedoheptulose 7-phosphate + D-glyceraldehyde 3-phosphate = D-erythrose 4-phosphate + beta-D-fructose 6-phosphate. It functions in the pathway carbohydrate degradation; pentose phosphate pathway; D-glyceraldehyde 3-phosphate and beta-D-fructose 6-phosphate from D-ribose 5-phosphate and D-xylulose 5-phosphate (non-oxidative stage): step 2/3. Transaldolase is important for the balance of metabolites in the pentose-phosphate pathway. In Geobacillus kaustophilus (strain HTA426), this protein is Probable transaldolase.